We begin with the raw amino-acid sequence, 445 residues long: Na(+)-translocating NADH-quinone reductase subunit A (445 aa).

The protein belongs to the NqrA family. As to quaternary structure, composed of six subunits; NqrA, NqrB, NqrC, NqrD, NqrE and NqrF.

It carries out the reaction a ubiquinone + n Na(+)(in) + NADH + H(+) = a ubiquinol + n Na(+)(out) + NAD(+). NQR complex catalyzes the reduction of ubiquinone-1 to ubiquinol by two successive reactions, coupled with the transport of Na(+) ions from the cytoplasm to the periplasm. NqrA to NqrE are probably involved in the second step, the conversion of ubisemiquinone to ubiquinol. The polypeptide is Na(+)-translocating NADH-quinone reductase subunit A (Pseudomonas aeruginosa (strain UCBPP-PA14)).